Here is a 63-residue protein sequence, read N- to C-terminus: Large ribosomal subunit protein bL28c (63 aa).

Belongs to the bacterial ribosomal protein bL28 family.

It is found in the plastid. The protein resides in the chloroplast. The protein is Large ribosomal subunit protein bL28c (rpl28) of Porphyra purpurea (Red seaweed).